The primary structure comprises 469 residues: MQVTETLNEGLKREIKIVVPARNLEEKLNERLDNTKDKIKLNGFRPGKVPAGYLRKMYGKSFMAEILNEIVSDASRSILAERGERSAMQPKIDVEEDKKILDGKADFIFSLKYEVLPKFEIKDFEHIEIIREIAVIPEQEIDDQVKRVLSSACNYSLKDGPSEEGDRVTIDYIGKLEGVPFEGGAESDAQLILGSKQFIPGFEEQLVGVKAGDMKTISVKFPDNYSAVHLAGKNAEFDITVKAVCKSDELKIDDEAAQKVGLESLERLREVVRGQIESQYGSMTRQKIKRQILDALDADYNFEIPEGLLEIEFNNIWAQVNDDLKKAGRSFEDEGVTEEQAREEYRVLAQRRVRLGLVLSEIGMNIGVKVSEDELKAAVFDQVRQYPGQEKEIMDFFRNTPEAVANLRAPIFEEKVIDHLLARIKVTDKEVTVEELMKEYDETDLTEKKPLKKKTAEKVSTKKKAPKKS.

The PPIase FKBP-type domain occupies 165-250 (GDRVTIDYIG…VKAVCKSDEL (86 aa)). Residues 444 to 460 (DLTEKKPLKKKTAEKVS) show a composition bias toward basic and acidic residues. The tract at residues 444–469 (DLTEKKPLKKKTAEKVSTKKKAPKKS) is disordered.

Belongs to the FKBP-type PPIase family. Tig subfamily.

The protein resides in the cytoplasm. The enzyme catalyses [protein]-peptidylproline (omega=180) = [protein]-peptidylproline (omega=0). In terms of biological role, involved in protein export. Acts as a chaperone by maintaining the newly synthesized protein in an open conformation. Functions as a peptidyl-prolyl cis-trans isomerase. The sequence is that of Trigger factor from Bartonella henselae (strain ATCC 49882 / DSM 28221 / CCUG 30454 / Houston 1) (Rochalimaea henselae).